The following is a 160-amino-acid chain: Large ribosomal subunit protein eL29 (160 aa).

The segment covering 1–26 (MAKSKNHTTHNQSRKWHRNGIKKPRS) has biased composition (basic residues). 2 disordered regions span residues 1–34 (MAKS…SLKG) and 115–160 (RLCQ…VKAP). Lys5 carries the N6-methyllysine modification. Ser31 bears the Phosphoserine mark. Lys33 is subject to N6-acetyllysine. Low complexity predominate over residues 126–160 (KAGAKAPAKAQASAPAQAPKGAQAPKGAQAPVKAP). 2 consecutive repeat copies span residues 127-134 (AGAKAPAK) and 135-142 (AQASAPAQ). Positions 127–142 (AGAKAPAKAQASAPAQ) are 2 X 8 AA tandem repeats of A-X-A-K-A-P-A-[KQ]. Residue Ser138 is modified to Phosphoserine. Lys145 carries the N6-acetyllysine modification.

It belongs to the eukaryotic ribosomal protein eL29 family. As to quaternary structure, component of the large ribosomal subunit.

The protein resides in the cytoplasm. Functionally, component of the large ribosomal subunit. The ribosome is a large ribonucleoprotein complex responsible for the synthesis of proteins in the cell. This is Large ribosomal subunit protein eL29 (Rpl29) from Mus musculus (Mouse).